The following is a 163-amino-acid chain: Nucleotide-binding protein Npun_R4736 (163 aa).

It belongs to the YajQ family.

Its function is as follows. Nucleotide-binding protein. This chain is Nucleotide-binding protein Npun_R4736, found in Nostoc punctiforme (strain ATCC 29133 / PCC 73102).